The following is a 908-amino-acid chain: Vacuolar membrane protease (908 aa).

Residues 1-25 are disordered; sequence MTSGEEEEGTREQVPVSQPTGTTSI. The Cytoplasmic portion of the chain corresponds to 1-48; sequence MTSGEEEEGTREQVPVSQPTGTTSIVSTKEKQPNIFIRAIRATFGYRK. The segment covering 15-25 has biased composition (polar residues); sequence PVSQPTGTTSI. Residues 49-69 form a helical membrane-spanning segment; the sequence is TSLTLFVLLTIFFTVAFSSYD. Topologically, residues 70-381 are vacuolar; the sequence is NSLDFTIDLP…FSTSVTTLNT (312 aa). Asparagine 143 and asparagine 162 each carry an N-linked (GlcNAc...) asparagine glycan. Zn(2+)-binding residues include histidine 176 and aspartate 188. Catalysis depends on glutamate 221, which acts as the Proton acceptor. Residues glutamate 222, glutamate 247, and histidine 319 each coordinate Zn(2+). N-linked (GlcNAc...) asparagine glycosylation occurs at asparagine 354. A helical transmembrane segment spans residues 382–402; the sequence is INMVLIVLFPVLSGPLLFITV. Residues 403–411 lie on the Cytoplasmic side of the membrane; it reads RYKKWNIGT. A helical transmembrane segment spans residues 412-432; that stretch reads ANLFSLPLAIVITSLVGAVVV. Residues 433–449 lie on the Vacuolar side of the membrane; the sequence is NQGFRLVNEFLPASRPM. A helical membrane pass occupies residues 450–470; the sequence is LLVTTTTSILLLTYYILLNGI. At 471–480 the chain is on the cytoplasmic side; it reads NFVSPSGDQK. The helical transmembrane segment at 481–501 threads the bilayer; sequence LVSIIQISFIYWIALIFVTRG. The Vacuolar segment spans residues 502–514; that stretch reads LSQNAIGDDHTGE. The chain crosses the membrane as a helical span at residues 515-535; sequence FAFTILFLLEATASLFGLIGW. Over 536-602 the chain is Cytoplasmic; the sequence is TFTRSVKEPT…MQHFGYDWSL (67 aa). Positions 543 to 584 are disordered; that stretch reads EPTGDEEPLLNGRMERYVDGSDDEDDVEEEDDEDQSEEENHQ. The span at 562-579 shows a compositional bias: acidic residues; sequence GSDDEDDVEEEDDEDQSE. A helical membrane pass occupies residues 603-623; it reads QFLLIVPISSLVIYNSGWLVI. The Vacuolar portion of the chain corresponds to 624–638; it reads DGINKSIQESLVAEN. N-linked (GlcNAc...) asparagine glycosylation occurs at asparagine 627. Residues 639–659 traverse the membrane as a helical segment; that stretch reads FIYLIIQLFSQFWILPILPFV. The Cytoplasmic segment spans residues 660–664; sequence YKLNR. The helical transmembrane segment at 665 to 685 threads the bilayer; it reads FMVLGLIAFALVGVTLISSVD. Residues 686–908 are Vacuolar-facing; sequence PFNQDNPLKL…LVSLTNRIEV (223 aa). 2 N-linked (GlcNAc...) asparagine glycosylation sites follow: asparagine 752 and asparagine 764.

It belongs to the peptidase M28 family. Zn(2+) is required as a cofactor.

The protein localises to the vacuole membrane. In terms of biological role, may be involved in vacuolar sorting and osmoregulation. In Candida tropicalis (strain ATCC MYA-3404 / T1) (Yeast), this protein is Vacuolar membrane protease.